The primary structure comprises 469 residues: Ribulose bisphosphate carboxylase large chain (469 aa).

An N6,N6,N6-trimethyllysine modification is found at K7. Residues N116 and T166 each coordinate substrate. The active-site Proton acceptor is the K168. Residue K170 participates in substrate binding. Mg(2+) contacts are provided by K194, D196, and E197. An N6-carboxylysine modification is found at K194. H287 (proton acceptor) is an active-site residue. Substrate contacts are provided by R288, H320, and S372.

Belongs to the RuBisCO large chain family. Type I subfamily. Heterohexadecamer of 8 large chains and 8 small chains; disulfide-linked. The disulfide link is formed within the large subunit homodimers. Mg(2+) serves as cofactor. Post-translationally, the disulfide bond which can form in the large chain dimeric partners within the hexadecamer appears to be associated with oxidative stress and protein turnover.

It is found in the plastid. The protein resides in the chloroplast. It catalyses the reaction 2 (2R)-3-phosphoglycerate + 2 H(+) = D-ribulose 1,5-bisphosphate + CO2 + H2O. The catalysed reaction is D-ribulose 1,5-bisphosphate + O2 = 2-phosphoglycolate + (2R)-3-phosphoglycerate + 2 H(+). In terms of biological role, ruBisCO catalyzes two reactions: the carboxylation of D-ribulose 1,5-bisphosphate, the primary event in carbon dioxide fixation, as well as the oxidative fragmentation of the pentose substrate in the photorespiration process. Both reactions occur simultaneously and in competition at the same active site. This chain is Ribulose bisphosphate carboxylase large chain, found in Pachira aquatica (Guiana chestnut).